Consider the following 1798-residue polypeptide: Laminin subunit beta-2 (1798 aa).

The first 32 residues, methionine 1–alanine 32, serve as a signal peptide directing secretion. The 240-residue stretch at serine 43–asparagine 282 folds into the Laminin N-terminal domain. N-linked (GlcNAc...) asparagine glycosylation occurs at asparagine 248. 19 cysteine pairs are disulfide-bonded: cysteine 283-cysteine 292, cysteine 285-cysteine 310, cysteine 312-cysteine 321, cysteine 324-cysteine 344, cysteine 347-cysteine 356, cysteine 349-cysteine 374, cysteine 377-cysteine 386, cysteine 389-cysteine 407, cysteine 410-cysteine 423, cysteine 412-cysteine 438, cysteine 440-cysteine 449, cysteine 452-cysteine 467, cysteine 470-cysteine 484, cysteine 472-cysteine 491, cysteine 493-cysteine 502, cysteine 505-cysteine 519, cysteine 522-cysteine 534, cysteine 524-cysteine 541, and cysteine 543-cysteine 552. Laminin EGF-like domains are found at residues cysteine 283–lysine 346, cysteine 347–serine 409, cysteine 410–arginine 469, and cysteine 470–proline 521. Asparagine 368 carries N-linked (GlcNAc...) asparagine glycosylation. The region spanning cysteine 522–cysteine 552 is the Laminin EGF-like 5; truncated domain. One can recognise a Laminin IV type B domain in the interval arginine 561–tyrosine 777. Cystine bridges form between cysteine 783–cysteine 795, cysteine 785–cysteine 802, cysteine 804–cysteine 813, cysteine 816–cysteine 828, cysteine 831–cysteine 843, cysteine 833–cysteine 850, cysteine 852–cysteine 861, cysteine 864–cysteine 874, cysteine 877–cysteine 886, cysteine 879–cysteine 893, cysteine 896–cysteine 905, cysteine 908–cysteine 924, cysteine 927–cysteine 943, cysteine 929–cysteine 954, cysteine 956–cysteine 965, cysteine 968–cysteine 983, cysteine 986–cysteine 1000, cysteine 988–cysteine 1007, cysteine 1010–cysteine 1019, cysteine 1022–cysteine 1035, cysteine 1038–cysteine 1058, cysteine 1040–cysteine 1065, cysteine 1067–cysteine 1076, cysteine 1079–cysteine 1092, cysteine 1095–cysteine 1107, cysteine 1097–cysteine 1114, cysteine 1116–cysteine 1125, cysteine 1128–cysteine 1140, cysteine 1143–cysteine 1155, cysteine 1145–cysteine 1162, cysteine 1164–cysteine 1173, and cysteine 1176–cysteine 1187. Laminin EGF-like domains follow at residues cysteine 783–alanine 830, cysteine 831–proline 876, cysteine 877–proline 926, cysteine 927–leucine 985, cysteine 986–arginine 1037, cysteine 1038–proline 1094, cysteine 1095–alanine 1142, and cysteine 1143–proline 1189. Residue asparagine 1085 is glycosylated (N-linked (GlcNAc...) asparagine). The segment at cysteine 1190–valine 1409 is domain II. N-linked (GlcNAc...) asparagine glycosylation is found at asparagine 1249, asparagine 1308, and asparagine 1348. Residues alanine 1253–aspartate 1319 are a coiled coil. The interval serine 1338–alanine 1364 is disordered. Over residues serine 1350–serine 1363 the composition is skewed to low complexity. Residues cysteine 1410–cysteine 1442 are domain alpha. Residues asparagine 1443 to glutamine 1798 are domain I. Residues serine 1472–glutamate 1526 adopt a coiled-coil conformation. Residue asparagine 1499 is glycosylated (N-linked (GlcNAc...) asparagine). Serine 1532 carries the phosphoserine; by FAM20C modification. Residues valine 1577–glutamine 1790 are a coiled coil.

Laminin is a complex glycoprotein, consisting of three different polypeptide chains (alpha, beta, gamma), which are bound to each other by disulfide bonds into a cross-shaped molecule comprising one long and three short arms with globules at each end. Beta-2 is a subunit of laminin-3 (laminin-121 or S-laminin), laminin-4 (laminin-221 or S-merosin), laminin-7 (laminin-321 or KS-laminin), laminin-9 (laminin-421), laminin-11 (laminin-521), laminin-14 (laminin-423) and laminin-15 (laminin-523).

It is found in the secreted. It localises to the extracellular space. The protein resides in the extracellular matrix. The protein localises to the basement membrane. Its function is as follows. Binding to cells via a high affinity receptor, laminin is thought to mediate the attachment, migration and organization of cells into tissues during embryonic development by interacting with other extracellular matrix components. This is Laminin subunit beta-2 (LAMB2) from Homo sapiens (Human).